The primary structure comprises 339 residues: MKQLLNPLKGNSDKIPVWFMRQAGRYLPEYKKIRETIKNFLDFCYDVNKATEVTLQPIRRYHFDAAIIFSDILVLPHALGWEVDFKENIGPILRQFRSQEDFKYLQSDTNNKLEKVYKIIKKVKKELPSTTSLIGFAGSPWTVMSYMLEGKGKQDFKTSKKFVYENKALSKELLNFLIDKTTYHLINQVESGANILKLFDSCSGVLAEEEFTEFVIEPTKKIILKVKEVLPKTPIIAFPKGAGLLYEKFIKEVPIDILAVDQMIPLEKMKEWSDKVIVQGNLDPVVLLTNKEIIKEKAYEILQVMEGKNFIFNLGHGILPETPIENVEFLTEYVRSFKK.

Residues 21 to 25 (RQAGR), Asp71, Tyr146, Ser201, and His316 contribute to the substrate site.

This sequence belongs to the uroporphyrinogen decarboxylase family. Homodimer.

It is found in the cytoplasm. The enzyme catalyses uroporphyrinogen III + 4 H(+) = coproporphyrinogen III + 4 CO2. The protein operates within porphyrin-containing compound metabolism; protoporphyrin-IX biosynthesis; coproporphyrinogen-III from 5-aminolevulinate: step 4/4. Catalyzes the decarboxylation of four acetate groups of uroporphyrinogen-III to yield coproporphyrinogen-III. The chain is Uroporphyrinogen decarboxylase from Rickettsia canadensis (strain McKiel).